Here is a 1495-residue protein sequence, read N- to C-terminus: ESX secretion system protein YukB (1495 aa).

The next 2 helical transmembrane spans lie at 246 to 266 (LWLVILPPLVMLIVMGVVAII) and 270 to 290 (GIFILVSLAMFMMTLITSTVQ). FtsK domains follow at residues 661–858 (KDDI…TDSK) and 993–1177 (QAPI…SEGY). ATP is bound by residues 682–689 (GTTGSGKS) and 1010–1017 (GSSGYGKS).

It belongs to the EssC family.

The protein resides in the cell membrane. Its function is as follows. Required for YukE secretion. Probable component or regulator of the ESX/ESAT-6-like secretion system (BsEss). The chain is ESX secretion system protein YukB (yukB) from Bacillus subtilis (strain 168).